Here is a 986-residue protein sequence, read N- to C-terminus: MAGIVHGILFCGLFGLCWAVTGSRIYPASEVTLLDSRSVQGELGWIASPLEGGWEEVSIMDEKNTPIRTYQVCNVMESSQNNWLRTDWIPRSGAQRVYVEIKFTLRDCNSLPGVMGTCKETFNLYYYESNNDKERFIRETQYVKIDTIAADESFTQVDIGDRIMKLNTEVRDVGPLSKKGFYLAFQDVGACIALVSVRVFYKKCPLTVRNLAQFPDTITGSDTSSLVEVRGSCVDNSEEKDVPKMYCGADGEWLVPIGNCLCNAGFEEHNGGCQACKVGYYKALSTDAACSKCPPHSYALREGSTSCTCDRGYFRADTDPASMPCTRPPSAPQNLISNVNETSVNLEWSPPQNSGGRPDVSYNLVCKRCGSDLTRCRPCGSGVHYSPQQNGLKTTKVSITDLQAHTNYTFEVWSINGVSKQNPGQDQAVSVTVTTNQAAPSTVTQIQPKDITRHSVSLTWPEPERPNGVILEYEVKYYEKDQNERTYRIVKTTSRSADIKGLNPLTAYVFHVRARTAAGYGEFSGPFEFTTNTVPSPMIGEGASPTVLLVSVAGSIVLVVILIAAFVISRRRSKYSKAKQEADEEKHLNQGVKTYVDPFTYEDPNQAVREFAKEIDASCIKIEKVIGVGEFGEVCSGRLKVPGKREIYVAIKTLKAGYTDKQRRDFLSEASIMGQFDHPNIIHLEGVVTKCKPVMIITEYMENGSLDAFLRKNDGRFTVIQLVGILRGIGSGMKYLSDMSYVHRDLAARNILVNSNLVCKVSDFGMSRVLEDDPEAAYTTRGGKIPIRWTAPEAIAYRKFTSASDVWSYGIVMWEVMSYGERPYWDMSNQDVIKAIEEGYRLPPPMDCPIALHQLMLDCWQKERSDRPKFGQIVSMLDKLIRNPNSLKRTGLDNSSRTNTTLLDPSSPEWSQVASVLDWLQAIKMERYKDNFTAAGYTSLEAVVHVNQDDLTRIGISSPSHQNKILSSVQGMRTQMQQIQGRMVPV.

The N-terminal stretch at Met1–Val20 is a signal peptide. At Thr21–Val547 the chain is on the extracellular side. The region spanning Glu30–Arg209 is the Eph LBD domain. Fibronectin type-III domains are found at residues Pro328–Ala438 and Ala439–Ser536. Residues Asn340 and Asn407 are each glycosylated (N-linked (GlcNAc...) asparagine). Residues Leu548 to Ser569 traverse the membrane as a helical segment. The Cytoplasmic segment spans residues Arg570–Val986. Phosphotyrosine; by autocatalysis occurs at positions 595 and 601. Positions Ile620–Ile881 constitute a Protein kinase domain. ATP contacts are provided by residues Ile626 to Val634 and Lys652. Asp745 functions as the Proton acceptor in the catalytic mechanism. Phosphotyrosine; by autocatalysis occurs at positions 778 and 928. The 65-residue stretch at Ser911 to Gln975 folds into the SAM domain. The PDZ-binding signature appears at Val984–Val986.

The protein belongs to the protein kinase superfamily. Tyr protein kinase family. Ephrin receptor subfamily.

The protein localises to the cell membrane. The protein resides in the early endosome. The catalysed reaction is L-tyrosyl-[protein] + ATP = O-phospho-L-tyrosyl-[protein] + ADP + H(+). Its function is as follows. Receptor tyrosine kinase which binds membrane-bound ephrin family ligands residing on adjacent cells, leading to contact-dependent bidirectional signaling into neighboring cells. The signaling pathway downstream of the receptor is referred to as forward signaling while the signaling pathway downstream of the ephrin ligand is referred to as reverse signaling. Highly promiscuous, it has the unique property among Eph receptors to bind and to be physiologically activated by both GPI-anchored ephrin-A and transmembrane ephrin-B ligands including EFNA1 and EFNB3. Upon activation by ephrin ligands, modulates cell morphology and integrin-dependent cell adhesion through regulation of the Rac, Rap and Rho GTPases activity. Plays an important role in the development of the nervous system controlling different steps of axonal guidance including the establishment of the corticospinal projections. The sequence is that of Ephrin type-A receptor 4-A (epha4-a) from Xenopus laevis (African clawed frog).